The chain runs to 392 residues: 4-hydroxy-3-methylbut-2-en-1-yl diphosphate synthase (flavodoxin) (392 aa).

4 residues coordinate [4Fe-4S] cluster: Cys280, Cys283, Cys315, and Glu322. Basic and acidic residues predominate over residues 371-380 (TEKGSDHCSE). Positions 371 to 392 (TEKGSDHCSETTRSGSPVVTVN) are disordered. The segment covering 381–392 (TTRSGSPVVTVN) has biased composition (polar residues).

It belongs to the IspG family. It depends on [4Fe-4S] cluster as a cofactor.

The enzyme catalyses (2E)-4-hydroxy-3-methylbut-2-enyl diphosphate + oxidized [flavodoxin] + H2O + 2 H(+) = 2-C-methyl-D-erythritol 2,4-cyclic diphosphate + reduced [flavodoxin]. It functions in the pathway isoprenoid biosynthesis; isopentenyl diphosphate biosynthesis via DXP pathway; isopentenyl diphosphate from 1-deoxy-D-xylulose 5-phosphate: step 5/6. Functionally, converts 2C-methyl-D-erythritol 2,4-cyclodiphosphate (ME-2,4cPP) into 1-hydroxy-2-methyl-2-(E)-butenyl 4-diphosphate. The chain is 4-hydroxy-3-methylbut-2-en-1-yl diphosphate synthase (flavodoxin) from Mycobacterium leprae (strain Br4923).